The sequence spans 610 residues: Sterol O-acyltransferase 1 (610 aa).

Residues Ser21 and Ser45 each carry the phosphoserine modification. The disordered stretch occupies residues 41–81; the sequence is SMEVSPRSSTTSLVEPVESTEGVESTEAERVAGKQEQEEEY. The segment covering 67 to 76 has biased composition (basic and acidic residues); sequence EAERVAGKQE. Helical transmembrane passes span 182–202, 229–249, 264–284, 371–391, and 409–429; these read LESN…WIAI, LFTI…VVFV, GFVA…PIYV, ISCS…QINY, and IIGT…PVAM. The short motif at 491–497 is the FYXDWWN motif element; sequence FYGDWWN. A run of 2 helical transmembrane segments spans residues 535–555 and 590–610; these read ATLF…FAIF and VVFS…YLTL. His547 is a catalytic residue.

This sequence belongs to the membrane-bound acyltransferase family. Sterol o-acyltransferase subfamily.

The protein localises to the endoplasmic reticulum membrane. The enzyme catalyses lanosterol + an acyl-CoA = lanosteryl ester + CoA. Sterol O-acyltransferase that catalyzes the formation of stery esters. The polypeptide is Sterol O-acyltransferase 1 (Saccharomyces cerevisiae (strain ATCC 204508 / S288c) (Baker's yeast)).